Here is a 226-residue protein sequence, read N- to C-terminus: 2-C-methyl-D-erythritol 4-phosphate cytidylyltransferase (226 aa).

The protein belongs to the IspD/TarI cytidylyltransferase family. IspD subfamily.

The catalysed reaction is 2-C-methyl-D-erythritol 4-phosphate + CTP + H(+) = 4-CDP-2-C-methyl-D-erythritol + diphosphate. Its pathway is isoprenoid biosynthesis; isopentenyl diphosphate biosynthesis via DXP pathway; isopentenyl diphosphate from 1-deoxy-D-xylulose 5-phosphate: step 2/6. Catalyzes the formation of 4-diphosphocytidyl-2-C-methyl-D-erythritol from CTP and 2-C-methyl-D-erythritol 4-phosphate (MEP). In Bacillus cereus (strain ATCC 10987 / NRS 248), this protein is 2-C-methyl-D-erythritol 4-phosphate cytidylyltransferase.